The sequence spans 196 residues: Carnitine operon protein CaiE (196 aa).

Residues 173–196 (TQPLRQMEENRPRLQGTTDVTPKR) are disordered. A compositionally biased stretch (polar residues) spans 187–196 (QGTTDVTPKR).

It belongs to the transferase hexapeptide repeat family.

It functions in the pathway amine and polyamine metabolism; carnitine metabolism. Functionally, overproduction of CaiE stimulates the activity of CaiB and CaiD. This chain is Carnitine operon protein CaiE, found in Escherichia coli O157:H7.